The chain runs to 306 residues: D-alanine--D-alanine ligase B (306 aa).

The ATP-grasp domain maps to Lys-101 to Glu-303. Position 134-189 (Ile-134–Thr-189) interacts with ATP. Mg(2+) is bound by residues Asp-257, Glu-270, and Asn-272.

Belongs to the D-alanine--D-alanine ligase family. In terms of assembly, monomer. Requires Mg(2+) as cofactor. Mn(2+) is required as a cofactor.

It is found in the cytoplasm. The catalysed reaction is 2 D-alanine + ATP = D-alanyl-D-alanine + ADP + phosphate + H(+). It functions in the pathway cell wall biogenesis; peptidoglycan biosynthesis. Functionally, cell wall formation. The chain is D-alanine--D-alanine ligase B (ddlB) from Salmonella typhimurium (strain LT2 / SGSC1412 / ATCC 700720).